We begin with the raw amino-acid sequence, 292 residues long: Ribosomal RNA small subunit methyltransferase A (292 aa).

S-adenosyl-L-methionine contacts are provided by asparagine 46, leucine 48, glycine 73, glutamate 94, aspartate 118, and asparagine 136.

Belongs to the class I-like SAM-binding methyltransferase superfamily. rRNA adenine N(6)-methyltransferase family. RsmA subfamily.

The protein resides in the cytoplasm. The enzyme catalyses adenosine(1518)/adenosine(1519) in 16S rRNA + 4 S-adenosyl-L-methionine = N(6)-dimethyladenosine(1518)/N(6)-dimethyladenosine(1519) in 16S rRNA + 4 S-adenosyl-L-homocysteine + 4 H(+). In terms of biological role, specifically dimethylates two adjacent adenosines (A1518 and A1519) in the loop of a conserved hairpin near the 3'-end of 16S rRNA in the 30S particle. May play a critical role in biogenesis of 30S subunits. In Deinococcus radiodurans (strain ATCC 13939 / DSM 20539 / JCM 16871 / CCUG 27074 / LMG 4051 / NBRC 15346 / NCIMB 9279 / VKM B-1422 / R1), this protein is Ribosomal RNA small subunit methyltransferase A.